Here is a 272-residue protein sequence, read N- to C-terminus: MARLAAFDMDGTLLMPDHQLGRETIATLSRLRERDITLTFATGRHVLEMRHILGTLSLDAYLITGNGTRIHSLEGDVLYRQDLDPQVADTVMHHAWDTGASMHVFNDNGWFTGQEIPALLQAHVYSGFRYQVIDIKSIPAHQVMKICFCGDHDSLIRLRIQLNETLEERAHLCFSAVDCLEVLPLGCNKGSALAVLSDHLGLSLADCMAFGDAMNDREMLGSVGQGLIMGNAMPQLIAALPHLSVIGHCGHQAVSHFLTHWLDNPHLPYSPE.

The active-site Nucleophile is the D8. Positions 8, 10, and 212 each coordinate Mg(2+).

This sequence belongs to the HAD-like hydrolase superfamily. Cof family. The cofactor is Mg(2+).

The enzyme catalyses 4-amino-2-methyl-5-(diphosphooxymethyl)pyrimidine + H2O = 4-amino-2-methyl-5-(phosphooxymethyl)pyrimidine + phosphate + H(+). Catalyzes the hydrolysis of 4-amino-2-methyl-5-hydroxymethylpyrimidine pyrophosphate (HMP-PP) to 4-amino-2-methyl-5-hydroxymethylpyrimidine phosphate (HMP-P). In Salmonella arizonae (strain ATCC BAA-731 / CDC346-86 / RSK2980), this protein is HMP-PP phosphatase.